We begin with the raw amino-acid sequence, 465 residues long: tRNA-2-methylthio-N(6)-dimethylallyladenosine synthase (465 aa).

In terms of domain architecture, MTTase N-terminal spans 5 to 125 (RKLHIKSYGC…LPELLKRAGN (121 aa)). [4Fe-4S] cluster is bound by residues cysteine 14, cysteine 50, cysteine 88, cysteine 166, cysteine 170, and cysteine 173. Positions 152–384 (RARGISAFVT…QELIDSQQSA (233 aa)) constitute a Radical SAM core domain. A TRAM domain is found at 387–449 (KAAIGSTVDV…RYSFLGELVT (63 aa)).

Belongs to the methylthiotransferase family. MiaB subfamily. In terms of assembly, monomer. The cofactor is [4Fe-4S] cluster.

The protein localises to the cytoplasm. It catalyses the reaction N(6)-dimethylallyladenosine(37) in tRNA + (sulfur carrier)-SH + AH2 + 2 S-adenosyl-L-methionine = 2-methylsulfanyl-N(6)-dimethylallyladenosine(37) in tRNA + (sulfur carrier)-H + 5'-deoxyadenosine + L-methionine + A + S-adenosyl-L-homocysteine + 2 H(+). In terms of biological role, catalyzes the methylthiolation of N6-(dimethylallyl)adenosine (i(6)A), leading to the formation of 2-methylthio-N6-(dimethylallyl)adenosine (ms(2)i(6)A) at position 37 in tRNAs that read codons beginning with uridine. This chain is tRNA-2-methylthio-N(6)-dimethylallyladenosine synthase, found in Bradyrhizobium diazoefficiens (strain JCM 10833 / BCRC 13528 / IAM 13628 / NBRC 14792 / USDA 110).